The following is a 189-amino-acid chain: MDKTTLSVNACNLEYVREKAIVGVQAAKTSTLIFFVIILAISALLLWFQTSDNPVFNELTRYMRIKNTVNDWKSLTDSKTKLESDRGRLLAAGKDDIFEFKCVDFGAYFIAMRLDKKTYLPQAIRRGTGDAWMVKKAAKVDPSAQQFCQYLIKHKSNNVITCGNEMLNELGYSGYFMSPHWCSDFSNME.

Over 1 to 28 (MDKTTLSVNACNLEYVREKAIVGVQAAK) the chain is Intravirion. A helical; Signal-anchor for type III membrane protein transmembrane segment spans residues 29 to 49 (TSTLIFFVIILAISALLLWFQ). Topologically, residues 50–189 (TSDNPVFNEL…HWCSDFSNME (140 aa)) are virion surface.

It belongs to the orthopoxvirus OPG107 family. As to quaternary structure, part of a stable entry-fusion complex (EFC) which is at least composed of proteins OPG143, OPG147, OPG155, OPG86, OPG94, OPG107, OPG104, and OPG099. Formation of the viral membrane is necessary for the assembly of the complex. In terms of processing, contains two intramolecular disulfide bonds. They are created by the viral disulfide bond formation pathway, a poxvirus-specific pathway that operates on the cytoplasmic side of the MV membranes.

It localises to the virion membrane. Its subcellular location is the host endoplasmic reticulum membrane. Its function is as follows. Envelope protein part of the entry-fusion complex responsible for the virus membrane fusion with host cell membrane during virus entry. Also plays a role in cell-cell fusion (syncytium formation). The polypeptide is Protein OPG107 (OPG107) (Bos taurus (Bovine)).